A 472-amino-acid polypeptide reads, in one-letter code: ATP synthase subunit beta (472 aa).

G156 to T163 contacts ATP.

The protein belongs to the ATPase alpha/beta chains family. As to quaternary structure, F-type ATPases have 2 components, CF(1) - the catalytic core - and CF(0) - the membrane proton channel. CF(1) has five subunits: alpha(3), beta(3), gamma(1), delta(1), epsilon(1). CF(0) has three main subunits: a(1), b(2) and c(9-12). The alpha and beta chains form an alternating ring which encloses part of the gamma chain. CF(1) is attached to CF(0) by a central stalk formed by the gamma and epsilon chains, while a peripheral stalk is formed by the delta and b chains.

Its subcellular location is the cell membrane. It catalyses the reaction ATP + H2O + 4 H(+)(in) = ADP + phosphate + 5 H(+)(out). Its function is as follows. Produces ATP from ADP in the presence of a proton gradient across the membrane. The catalytic sites are hosted primarily by the beta subunits. The sequence is that of ATP synthase subunit beta from Symbiobacterium thermophilum (strain DSM 24528 / JCM 14929 / IAM 14863 / T).